Reading from the N-terminus, the 199-residue chain is Glycerol-3-phosphate acyltransferase (199 aa).

5 consecutive transmembrane segments (helical) span residues 4-24 (FALFYMLFAYLLGSVSSAILI), 56-76 (LAVLIFDMLKGMIPVWAGYYL), 80-100 (QFELGMVALGACLGHIFPIFF), 115-135 (IAPISWAVAGSMFGTWIFVFL), and 154-176 (YVWWFKPEFTFPVALVCCLLIYR).

It belongs to the PlsY family. Probably interacts with PlsX.

The protein localises to the cell inner membrane. It catalyses the reaction an acyl phosphate + sn-glycerol 3-phosphate = a 1-acyl-sn-glycero-3-phosphate + phosphate. Its pathway is lipid metabolism; phospholipid metabolism. Functionally, catalyzes the transfer of an acyl group from acyl-phosphate (acyl-PO(4)) to glycerol-3-phosphate (G3P) to form lysophosphatidic acid (LPA). This enzyme utilizes acyl-phosphate as fatty acyl donor, but not acyl-CoA or acyl-ACP. The polypeptide is Glycerol-3-phosphate acyltransferase (Haemophilus influenzae (strain PittEE)).